Consider the following 335-residue polypeptide: Glucokinase (335 aa).

11–16 is a binding site for ATP; it reads ADIGGT.

This sequence belongs to the bacterial glucokinase family.

The protein resides in the cytoplasm. The catalysed reaction is D-glucose + ATP = D-glucose 6-phosphate + ADP + H(+). This Xanthomonas axonopodis pv. citri (strain 306) protein is Glucokinase.